We begin with the raw amino-acid sequence, 157 residues long: Peptide methionine sulfoxide reductase MsrA (157 aa).

Residue Cys10 is part of the active site.

This sequence belongs to the MsrA Met sulfoxide reductase family.

It carries out the reaction L-methionyl-[protein] + [thioredoxin]-disulfide + H2O = L-methionyl-(S)-S-oxide-[protein] + [thioredoxin]-dithiol. The catalysed reaction is [thioredoxin]-disulfide + L-methionine + H2O = L-methionine (S)-S-oxide + [thioredoxin]-dithiol. Functionally, has an important function as a repair enzyme for proteins that have been inactivated by oxidation. Catalyzes the reversible oxidation-reduction of methionine sulfoxide in proteins to methionine. The protein is Peptide methionine sulfoxide reductase MsrA of Clostridium botulinum (strain Kyoto / Type A2).